The chain runs to 516 residues: Protein indeterminate-domain 4, chloroplastic (516 aa).

A compositionally biased stretch (low complexity) spans 1–26 (MSSSSYNTSVIPSSSSSAQPFFITSS). A disordered region spans residues 1-68 (MSSSSYNTSV…QPGNPNPDAE (68 aa)). A chloroplast-targeting transit peptide spans 1 to 70 (MSSSSYNTSV…GNPNPDAEVV (70 aa)). S73 is subject to Phosphoserine. 2 C2H2-type zinc fingers span residues 83-105 (FICD…RRGH) and 124-154 (YLCP…YRKH). A Nuclear localization signal motif is present at residues 146–153 (IKKHYYRK). Residues 159 to 182 (WKCEKCSKRYAVQSDWKAHSKTCG) form a C2H2-type 2; degenerate zinc finger. Positions 161, 164, 177, 181, 188, 190, 203, and 207 each coordinate Zn(2+). The CCHC-type 2; atypical zinc-finger motif lies at 186–209 (YRCDCGTIFSRRDSYITHRAFCDA). The tract at residues 196–208 (RRDSYITHRAFCD) is SHR-binding. The interval 483–516 (NRGGGGGGRGSARGGVSLDGEAKFPEQNYPFGRG) is disordered. Positions 484–495 (RGGGGGGRGSAR) are enriched in gly residues.

As to quaternary structure, binds to RGA and SCL3 competitively in the nucleus.

The protein localises to the plastid. The protein resides in the chloroplast. It is found in the nucleus. Functionally, transcription factor that may act a transcriptional activator of nuclear-encoded photosynthetic gene expression. Binds DNA via its zinc fingers. Recognizes and binds to SCL3 promoter sequence 5'-AGACAA-3' to promote its expression when in complex with RGA. The chain is Protein indeterminate-domain 4, chloroplastic from Arabidopsis thaliana (Mouse-ear cress).